The chain runs to 142 residues: Semaphorin-like protein VACWR164 (142 aa).

The region spanning 1–142 (MNTIKQSFST…MPQMKKILKM (142 aa)) is the Sema domain.

This sequence belongs to the semaphorin family.

This is Semaphorin-like protein VACWR164 from Bos taurus (Bovine).